Consider the following 461-residue polypeptide: MNKYVVILAAGKGTRMKSQLYKVLHKVCGKTMVEHVVNAAKGTNPDKIITVVGNGADSVKDVLAGQSDFAFQEQQLGTGDAVLAASDLLENLDGSTLVATGDTPLFTAETFNNLFKKHEESGNSATVLTAKAPNPFGYGRIIRDEDGNVLRIVEQKDGTPEELAVDEINTGVFCFDNKELFKALKQVGNDNAQGEYYLTDVLEIMRKAGHKVGAYEMPDFSESLGVNDRIALAQATKIMQRRINEEHMKNGVSFIDPDTAYIDSDVKIGNDTVIEGNVVIKGNTEIGSDCYITNSSRIVDSKIGNHVTITSSTLQEAQMDDNTDIGPNSHLRPKAVIRKGAHIGNFVEIKKAEIGENSKVGHLTYVGDATLGKDINIGCGTIFSNYDGVKKFHTNVGDHSFIGAGATIIAPVNIADHSFVAADSTITKDVARYDMAIARGRQTNKPDYWHKLPLSKDKEWE.

Residues 1 to 229 (MNKYVVILAA…FSESLGVNDR (229 aa)) form a pyrophosphorylase region. UDP-N-acetyl-alpha-D-glucosamine-binding positions include 8–11 (LAAG), lysine 22, glutamine 72, and 77–78 (GT). Residue aspartate 102 participates in Mg(2+) binding. Positions 139, 154, 169, and 227 each coordinate UDP-N-acetyl-alpha-D-glucosamine. Residue asparagine 227 participates in Mg(2+) binding. Residues 230–250 (IALAQATKIMQRRINEEHMKN) are linker. Residues 251–461 (GVSFIDPDTA…LPLSKDKEWE (211 aa)) are N-acetyltransferase. Residues arginine 332 and lysine 350 each contribute to the UDP-N-acetyl-alpha-D-glucosamine site. Histidine 362 serves as the catalytic Proton acceptor. UDP-N-acetyl-alpha-D-glucosamine is bound by residues tyrosine 365 and asparagine 376. Residues 385–386 (NY), alanine 422, and arginine 439 contribute to the acetyl-CoA site.

The protein in the N-terminal section; belongs to the N-acetylglucosamine-1-phosphate uridyltransferase family. It in the C-terminal section; belongs to the transferase hexapeptide repeat family. In terms of assembly, homotrimer. It depends on Mg(2+) as a cofactor.

It localises to the cytoplasm. The enzyme catalyses alpha-D-glucosamine 1-phosphate + acetyl-CoA = N-acetyl-alpha-D-glucosamine 1-phosphate + CoA + H(+). It catalyses the reaction N-acetyl-alpha-D-glucosamine 1-phosphate + UTP + H(+) = UDP-N-acetyl-alpha-D-glucosamine + diphosphate. It functions in the pathway nucleotide-sugar biosynthesis; UDP-N-acetyl-alpha-D-glucosamine biosynthesis; N-acetyl-alpha-D-glucosamine 1-phosphate from alpha-D-glucosamine 6-phosphate (route II): step 2/2. The protein operates within nucleotide-sugar biosynthesis; UDP-N-acetyl-alpha-D-glucosamine biosynthesis; UDP-N-acetyl-alpha-D-glucosamine from N-acetyl-alpha-D-glucosamine 1-phosphate: step 1/1. It participates in bacterial outer membrane biogenesis; LPS lipid A biosynthesis. Functionally, catalyzes the last two sequential reactions in the de novo biosynthetic pathway for UDP-N-acetylglucosamine (UDP-GlcNAc). The C-terminal domain catalyzes the transfer of acetyl group from acetyl coenzyme A to glucosamine-1-phosphate (GlcN-1-P) to produce N-acetylglucosamine-1-phosphate (GlcNAc-1-P), which is converted into UDP-GlcNAc by the transfer of uridine 5-monophosphate (from uridine 5-triphosphate), a reaction catalyzed by the N-terminal domain. In Lactobacillus gasseri (strain ATCC 33323 / DSM 20243 / BCRC 14619 / CIP 102991 / JCM 1131 / KCTC 3163 / NCIMB 11718 / NCTC 13722 / AM63), this protein is Bifunctional protein GlmU.